The chain runs to 309 residues: HPr kinase/phosphorylase (309 aa).

Residues H138 and K159 contribute to the active site. Position 153-160 (153-160 (GKSGIGKS)) interacts with ATP. A Mg(2+)-binding site is contributed by S160. Residue D177 is the Proton acceptor; for phosphorylation activity. Proton donor; for dephosphorylation activity of the active site. The interval 201–210 (IEVRGIGILD) is important for the catalytic mechanism of both phosphorylation and dephosphorylation. E202 provides a ligand contact to Mg(2+). R243 is a catalytic residue. Positions 264 to 269 (PIKPAR) are important for the catalytic mechanism of dephosphorylation.

Belongs to the HPrK/P family. Homohexamer. Mg(2+) serves as cofactor.

It catalyses the reaction [HPr protein]-L-serine + ATP = [HPr protein]-O-phospho-L-serine + ADP + H(+). It carries out the reaction [HPr protein]-O-phospho-L-serine + phosphate + H(+) = [HPr protein]-L-serine + diphosphate. Catalyzes the ATP- as well as the pyrophosphate-dependent phosphorylation of a specific serine residue in HPr, a phosphocarrier protein of the phosphoenolpyruvate-dependent sugar phosphotransferase system (PTS). HprK/P also catalyzes the pyrophosphate-producing, inorganic phosphate-dependent dephosphorylation (phosphorolysis) of seryl-phosphorylated HPr (P-Ser-HPr). The two antagonistic activities of HprK/P are regulated by several intracellular metabolites, which change their concentration in response to the absence or presence of rapidly metabolisable carbon sources (glucose, fructose, etc.) in the growth medium. Therefore, by controlling the phosphorylation state of HPr, HPrK/P is a sensor enzyme that plays a major role in the regulation of carbon metabolism and sugar transport: it mediates carbon catabolite repression (CCR), and regulates PTS-catalyzed carbohydrate uptake and inducer exclusion. In Alkaliphilus metalliredigens (strain QYMF), this protein is HPr kinase/phosphorylase.